A 486-amino-acid chain; its full sequence is Wax ester synthase/diacylglycerol acyltransferase 11 (486 aa).

Residues 1-192 (MGEDKKTARE…CNSGFFNKIW (192 aa)) are Cytoplasmic-facing. The active-site Proton acceptor is the His-144. The chain crosses the membrane as a helical span at residues 193-213 (WLFVGLWFILRLLFNTFVDIL). Residues 214-486 (MFALTIFVLR…LERGLYEIEV (273 aa)) lie on the Extracellular side of the membrane.

This sequence in the N-terminal section; belongs to the long-chain O-acyltransferase family. Mostly expressed in inflorescences and flowers, especially at the periphery of petal epidermal cells.

It localises to the cell membrane. It is found in the endoplasmic reticulum membrane. It carries out the reaction an acyl-CoA + a 1,2-diacyl-sn-glycerol = a triacyl-sn-glycerol + CoA. The enzyme catalyses a long chain fatty alcohol + a fatty acyl-CoA = a wax ester + CoA. The protein operates within glycerolipid metabolism; triacylglycerol biosynthesis. It functions in the pathway lipid metabolism. Bifunctional wax ester synthase/diacylglycerol acyltransferase. Involved in cuticular wax biosynthesis. Required for petals development, probably by mediating the production of fatty acids at the plasma membrane in the petal epidermis acting as lubricants that makes petal elongation smooth in narrow space between the sepals and the anthers inside floral buds. The chain is Wax ester synthase/diacylglycerol acyltransferase 11 from Arabidopsis thaliana (Mouse-ear cress).